Reading from the N-terminus, the 211-residue chain is Ribonuclease T (211 aa).

Residues 24–198 form the Exonuclease domain; that stretch reads VVVDVETGGF…YDAEKTAHLF (175 aa). Residues D27, E29, H185, and D190 each coordinate Mg(2+). The Proton donor/acceptor role is filled by H185.

It belongs to the RNase T family. As to quaternary structure, homodimer. The cofactor is Mg(2+).

Functionally, trims short 3' overhangs of a variety of RNA species, leaving a one or two nucleotide 3' overhang. Responsible for the end-turnover of tRNA: specifically removes the terminal AMP residue from uncharged tRNA (tRNA-C-C-A). Also appears to be involved in tRNA biosynthesis. The polypeptide is Ribonuclease T (Xylella fastidiosa (strain 9a5c)).